Consider the following 634-residue polypeptide: Probable LRR receptor-like serine/threonine-protein kinase At2g23950 (634 aa).

A signal peptide spans 1 to 27; sequence MVVMKLITMKIFSVLLLLCFFVTCSLS. At 28 to 236 the chain is on the extracellular side; the sequence is SEPRNPEVEA…SSGRRTNILA (209 aa). Residues N96 and N109 are each glycosylated (N-linked (GlcNAc...) asparagine). LRR repeat units follow at residues 99–121, 123–145, 147–167, and 171–193; these read NLRQ…ICSL, KLQT…VNQL, NLQY…ASLS, and HLSF…PART. N-linked (GlcNAc...) asparagine glycosylation occurs at N155. The helical transmembrane segment at 237 to 257 threads the bilayer; the sequence is VALGVSLGFAVSVILSLGFIW. Topologically, residues 258 to 634 are cytoplasmic; that stretch reads YRKKQRRLTM…SFAMELSGPR (377 aa). T296 carries the phosphothreonine modification. Positions 299 to 554 constitute a Protein kinase domain; sequence FSSKSILGAG…QVALLCTQFL (256 aa). 305–313 lines the ATP pocket; the sequence is LGAGGFGNV. A Phosphothreonine modification is found at T322. K327 lines the ATP pocket. Phosphoserine is present on residues S380 and S383. T395 carries the phosphothreonine modification. D422 functions as the Proton acceptor in the catalytic mechanism. 3 positions are modified to phosphothreonine: T455, T456, and T461. A Phosphotyrosine modification is found at Y469. S471 is subject to Phosphoserine. T472 carries the phosphothreonine modification. Phosphoserine is present on S476. Phosphothreonine is present on T551.

The protein belongs to the protein kinase superfamily. Ser/Thr protein kinase family.

The protein localises to the membrane. It catalyses the reaction L-seryl-[protein] + ATP = O-phospho-L-seryl-[protein] + ADP + H(+). It carries out the reaction L-threonyl-[protein] + ATP = O-phospho-L-threonyl-[protein] + ADP + H(+). In Arabidopsis thaliana (Mouse-ear cress), this protein is Probable LRR receptor-like serine/threonine-protein kinase At2g23950.